A 1208-amino-acid polypeptide reads, in one-letter code: DNA-directed RNA polymerase subunit beta (1208 aa).

This sequence belongs to the RNA polymerase beta chain family. In terms of assembly, the RNAP catalytic core consists of 2 alpha, 1 beta, 1 beta' and 1 omega subunit. When a sigma factor is associated with the core the holoenzyme is formed, which can initiate transcription.

The catalysed reaction is RNA(n) + a ribonucleoside 5'-triphosphate = RNA(n+1) + diphosphate. DNA-dependent RNA polymerase catalyzes the transcription of DNA into RNA using the four ribonucleoside triphosphates as substrates. The polypeptide is DNA-directed RNA polymerase subunit beta (Enterococcus faecium (Streptococcus faecium)).